The following is a 534-amino-acid chain: ATP synthase subunit alpha 2 (534 aa).

Residue 175-182 (GDRQTGKT) participates in ATP binding. The tract at residues 506 to 534 (FQPAPEPETAPKTKTDIKPKPKAAGGESS) is disordered. Residues 514 to 524 (TAPKTKTDIKP) are compositionally biased toward basic and acidic residues.

The protein belongs to the ATPase alpha/beta chains family. In terms of assembly, F-type ATPases have 2 components, CF(1) - the catalytic core - and CF(0) - the membrane proton channel. CF(1) has five subunits: alpha(3), beta(3), gamma(1), delta(1), epsilon(1). CF(0) has three main subunits: a(1), b(2) and c(9-12). The alpha and beta chains form an alternating ring which encloses part of the gamma chain. CF(1) is attached to CF(0) by a central stalk formed by the gamma and epsilon chains, while a peripheral stalk is formed by the delta and b chains.

Its subcellular location is the cell inner membrane. The enzyme catalyses ATP + H2O + 4 H(+)(in) = ADP + phosphate + 5 H(+)(out). In terms of biological role, produces ATP from ADP in the presence of a proton gradient across the membrane. The alpha chain is a regulatory subunit. This Albidiferax ferrireducens (strain ATCC BAA-621 / DSM 15236 / T118) (Rhodoferax ferrireducens) protein is ATP synthase subunit alpha 2.